The sequence spans 541 residues: Protein wntless homolog A (541 aa).

The N-terminal stretch at 1–28 (MAGAIIENMSTKKLCMVGVALLLLQVLA) is a signal peptide. Over 29–232 (FLVGGLIAPK…SIFQNGGFTM (204 aa)) the chain is Lumenal. Residues 233–253 (VWFAMKTFLTPSIIIIMIWYW) form a helical membrane-spanning segment. The Cytoplasmic portion of the chain corresponds to 254–268 (RRITMMTRSPVLLEK). A helical transmembrane segment spans residues 269-289 (VIFALGFSMTFINIPVEWFSI). The Lumenal portion of the chain corresponds to 290 to 303 (GYDWTWMLLFGDIR). The chain crosses the membrane as a helical span at residues 304–324 (QGIFYAMLLSFWIIFCGEHMM). Over 325 to 331 (DQTERNR) the chain is Cytoplasmic. A helical transmembrane segment spans residues 332-352 (ISVYWKQVGPIAFGSCCLFIF). At 353-379 (DMCERGVQLKNPFYSIWTTDVGAEIAM) the chain is on the lumenal side. A helical membrane pass occupies residues 380–400 (AFIIVAGICACLYFLFLCFMV). Residues 401–431 (YQVFRNISGKQSNLPAMTKARRLHYEGLIFR) are Cytoplasmic-facing. The chain crosses the membrane as a helical span at residues 432–452 (FKFLMIITLACAALTIVFFIT). Over 453 to 471 (TQITEGNWKLGDLSIELNS) the chain is Lumenal. The helical transmembrane segment at 472–492 (AFFTGVYGMWNLYVFALMFLY) threads the bilayer. Over 493-541 (APSHKHYGDGQSNDGAGMSSGEELQLTTTITHIDGPTEVYRLAGKEAQE) the chain is Cytoplasmic.

This sequence belongs to the wntless family.

Its subcellular location is the golgi apparatus membrane. The protein resides in the cytoplasmic vesicle membrane. In terms of biological role, required for a subset of Wnt-dependent developmental processes, in particular, eye and pronephros development. Regulates the secretion of wnt4, which is required for eye development. This Xenopus laevis (African clawed frog) protein is Protein wntless homolog A (wls-a).